A 79-amino-acid polypeptide reads, in one-letter code: Sulfur carrier protein TusA (79 aa).

C17 functions as the Cysteine persulfide intermediate in the catalytic mechanism.

The protein belongs to the sulfur carrier protein TusA family.

It is found in the cytoplasm. Functionally, sulfur carrier protein which probably makes part of a sulfur-relay system. The chain is Sulfur carrier protein TusA from Actinobacillus pleuropneumoniae serotype 7 (strain AP76).